Consider the following 566-residue polypeptide: Liver carboxylesterase 1 (566 aa).

The first 18 residues, 1-18 (MWLRALVLATLAAFTAWG), serve as a signal peptide directing secretion. Residue asparagine 79 is glycosylated (N-linked (GlcNAc...) asparagine). Cysteine 87 and cysteine 116 are joined by a disulfide. Residue serine 221 is the Acyl-ester intermediate of the active site. The cysteines at positions 274 and 285 are disulfide-linked. Residue glutamate 354 is the Charge relay system of the active site. Residue serine 379 is modified to Phosphoserine. Residue histidine 467 is the Charge relay system of the active site.

It belongs to the type-B carboxylesterase/lipase family. In terms of assembly, homotrimer and homohexamer. Binds to beta-glucuronidase.

The protein resides in the endoplasmic reticulum lumen. It localises to the cytoplasm. It is found in the lipid droplet. It carries out the reaction a carboxylic ester + H2O = an alcohol + a carboxylate + H(+). It catalyses the reaction cholesteryl (9Z-octadecenoate) + H2O = cholesterol + (9Z)-octadecenoate + H(+). The catalysed reaction is 2-(5Z,8Z,11Z,14Z-eicosatetraenoyl)-glycerol + H2O = glycerol + (5Z,8Z,11Z,14Z)-eicosatetraenoate + H(+). The enzyme catalyses prostaglandin E2 1-glyceryl ester + H2O = prostaglandin E2 + glycerol + H(+). It carries out the reaction a cholesterol ester + H2O = cholesterol + a fatty acid + H(+). It catalyses the reaction prostaglandin F2alpha 1-glyceryl ester + H2O = prostaglandin F2alpha + glycerol + H(+). Functionally, involved in the detoxification of xenobiotics and in the activation of ester and amide prodrugs. Hydrolyzes aromatic and aliphatic esters, but has no catalytic activity toward amides or a fatty acyl-CoA ester. Displays fatty acid ethyl ester synthase activity, catalyzing the ethyl esterification of oleic acid to ethyloleate. Converts monoacylglycerides to free fatty acids and glycerol. Hydrolyzes of 2-arachidonoylglycerol and prostaglandins. Hydrolyzes cellular cholesteryl esters to free cholesterols and promotes reverse cholesterol transport (RCT) by facilitating both the initial and final steps in the process. First of all, allows free cholesterol efflux from macrophages to extracellular cholesterol acceptors and secondly, releases free cholesterol from lipoprotein-delivered cholesteryl esters in the liver for bile acid synthesis or direct secretion into the bile. The polypeptide is Liver carboxylesterase 1 (Macaca fascicularis (Crab-eating macaque)).